A 544-amino-acid polypeptide reads, in one-letter code: CTP synthase (544 aa).

Positions 1–265 (MTRYIFITGG…DTQVLAYFGL (265 aa)) are amidoligase domain. CTP is bound at residue serine 13. Serine 13 serves as a coordination point for UTP. 14–19 (SLGKGL) provides a ligand contact to ATP. Residue tyrosine 54 participates in L-glutamine binding. Aspartate 71 contributes to the ATP binding site. Residues aspartate 71 and glutamate 139 each contribute to the Mg(2+) site. CTP-binding positions include 146–148 (DIE), 186–191 (KTKPTQ), and lysine 222. UTP is bound by residues 186–191 (KTKPTQ) and lysine 222. ATP is bound at residue valine 240. A Glutamine amidotransferase type-1 domain is found at 291–543 (TIAVVGKYTS…IKAAIEQSRL (253 aa)). Position 353 (glycine 353) interacts with L-glutamine. The Nucleophile; for glutamine hydrolysis role is filled by cysteine 380. L-glutamine contacts are provided by residues 381–384 (FGMQ), glutamate 404, and arginine 472. Residues histidine 516 and glutamate 518 contribute to the active site.

This sequence belongs to the CTP synthase family. As to quaternary structure, homotetramer.

The enzyme catalyses UTP + L-glutamine + ATP + H2O = CTP + L-glutamate + ADP + phosphate + 2 H(+). It carries out the reaction L-glutamine + H2O = L-glutamate + NH4(+). It catalyses the reaction UTP + NH4(+) + ATP = CTP + ADP + phosphate + 2 H(+). The protein operates within pyrimidine metabolism; CTP biosynthesis via de novo pathway; CTP from UDP: step 2/2. With respect to regulation, allosterically activated by GTP, when glutamine is the substrate; GTP has no effect on the reaction when ammonia is the substrate. The allosteric effector GTP functions by stabilizing the protein conformation that binds the tetrahedral intermediate(s) formed during glutamine hydrolysis. Inhibited by the product CTP, via allosteric rather than competitive inhibition. In terms of biological role, catalyzes the ATP-dependent amination of UTP to CTP with either L-glutamine or ammonia as the source of nitrogen. Regulates intracellular CTP levels through interactions with the four ribonucleotide triphosphates. The chain is CTP synthase from Azospirillum brasilense.